Consider the following 159-residue polypeptide: MADVPGAQRAVPGDGPEPRDPLDCWACAVLVTAQNLLVAAFNLLLLVLVLGTILLPAVTMLGFGFLCHSQFLRSQAPPCTAHLRDPGFTALLVTGFLLLVPLLVLALASYRRLCLRLRLADCLVPYSRALYRRRRAPQPRQIRASPGSQAVPTSGKVWV.

Transmembrane regions (helical) follow at residues 43–63 (LLLLVLVLGTILLPAVTMLGF) and 88–108 (FTALLVTGFLLLVPLLVLALA). Positions 137-159 (PQPRQIRASPGSQAVPTSGKVWV) are disordered.

It belongs to the TMEM88 family. As to quaternary structure, interacts (via C-terminus) with DVL1.

Its subcellular location is the cell membrane. Its function is as follows. Inhibits the Wnt/beta-catenin signaling pathway. Crucial for heart development and acts downstream of GATA factors in the pre-cardiac mesoderm to specify lineage commitment of cardiomyocyte development. In Homo sapiens (Human), this protein is Transmembrane protein 88 (TMEM88).